Consider the following 275-residue polypeptide: Aliphatic sulfonates import ATP-binding protein SsuB 1 (275 aa).

Positions 34–260 (ISLTGLEKSF…RHGHPGLCEL (227 aa)) constitute an ABC transporter domain. 66 to 73 (GKSGCGKS) is an ATP binding site.

Belongs to the ABC transporter superfamily. Aliphatic sulfonates importer (TC 3.A.1.17.2) family. In terms of assembly, the complex is composed of two ATP-binding proteins (SsuB), two transmembrane proteins (SsuC) and a solute-binding protein (SsuA).

Its subcellular location is the cell inner membrane. It catalyses the reaction ATP + H2O + aliphatic sulfonate-[sulfonate-binding protein]Side 1 = ADP + phosphate + aliphatic sulfonateSide 2 + [sulfonate-binding protein]Side 1.. In terms of biological role, part of the ABC transporter complex SsuABC involved in aliphatic sulfonates import. Responsible for energy coupling to the transport system. The protein is Aliphatic sulfonates import ATP-binding protein SsuB 1 of Rhizobium johnstonii (strain DSM 114642 / LMG 32736 / 3841) (Rhizobium leguminosarum bv. viciae).